Consider the following 918-residue polypeptide: Cap-specific mRNA (nucleoside-2'-O-)-methyltransferase 1 (918 aa).

Positions 1–18 are enriched in basic and acidic residues; the sequence is MADRKSDEGEDEYQHKEQ. Disordered stretches follow at residues 1-56 and 62-81; these read MADR…EERA and KRGY…EEEP. The span at 19 to 30 shows a compositional bias: polar residues; the sequence is MVTNRTSSFQPK. Residues 43–56 show a composition bias toward basic and acidic residues; the sequence is RAADRREEFMEERA. Acidic residues predominate over residues 68–80; sequence GDDEEDDFTAEEE. The G-patch domain occupies 86–132; sequence PLTVAERLMAAMGHKAGEGLGKHGQGISEPIASSTQRGRTGLGHNAG. The RrmJ-type SAM-dependent 2'-O-MTase domain maps to 236-465; the sequence is FFQNRAAMKT…ERYITCKGLR (230 aa). 2 residues coordinate S-adenosyl-L-methionine: Gly-298 and Asp-379. Lys-419 serves as the catalytic Proton acceptor.

The catalysed reaction is a 5'-end (N(7)-methyl 5'-triphosphoguanosine)-ribonucleoside in mRNA + S-adenosyl-L-methionine = a 5'-end (N(7)-methyl 5'-triphosphoguanosine)-(2'-O-methyl-ribonucleoside) in mRNA + S-adenosyl-L-homocysteine + H(+). Its function is as follows. S-adenosyl-L-methionine-dependent methyltransferase that mediates mRNA cap1 2'-O-ribose methylation to the 5'-cap structure of mRNAs. Methylates the ribose of the first nucleotide of a m(7)GpppG-capped mRNA to produce m(7)GpppNmp (cap1). Cap1 modification is linked to higher levels of translation. In Caenorhabditis elegans, this protein is Cap-specific mRNA (nucleoside-2'-O-)-methyltransferase 1.